A 372-amino-acid chain; its full sequence is Proton-coupled zinc antiporter SLC30A2 (372 aa).

Residues 1–140 (MEAKEKQHLL…TMNFGWQRAE (140 aa)) lie on the Cytoplasmic side of the membrane. Residues 51 to 54 (HHCH) carry the Mitochondrial localization signal motif. 3 residues coordinate Zn(2+): C53, H106, and D110. The helical transmembrane segment at 141 to 161 (ILGALVSVLSIWVVTGVLVYL) threads the bilayer. At 162-175 (AVERLISGDYEIDG) the chain is on the lumenal side. Residues 176 to 196 (GTMLITSGCAVAVNIIMGLTL) traverse the membrane as a helical segment. Residues 197–220 (HQSGHGHSHGTTNQQEENPSVRAA) lie on the Cytoplasmic side of the membrane. A helical membrane pass occupies residues 221–241 (FIHVIGDFMQSMGVLVAAYIL). Zn(2+) is bound by residues H223 and D227. Residues 242-249 (YFKPEYKY) are Lumenal-facing. The chain crosses the membrane as a helical span at residues 250 to 270 (VDPICTFVFSILVLGTTLTIL). Residues 271-304 (RDVILVLMEGTPKGVDFTAVRDLLLSVEGVEALH) are Cytoplasmic-facing. The short motif at 294–295 (LL) is the Lysosomal targeting motif element. S296 is modified (phosphoserine). H304, H321, and E355 together coordinate Zn(2+). A helical membrane pass occupies residues 305 to 325 (SLHIWALTVAQPVLSVHIAIA). The Lumenal segment spans residues 326–372 (QNTDAQAVLKTASSRLQGKFHFHTVTIQIEDYSEDMKDCQACQGPSD).

Belongs to the cation diffusion facilitator (CDF) transporter (TC 2.A.4) family. SLC30A subfamily. As to quaternary structure, homodimer. Interacts (via lysosomal targeting motif) with AP3D1; in AP-3-mediated transport to lysosomes. Interacts with TMEM163. Phosphorylated at Ser-296. Phosphorylation at Ser-296 prevents localization to lysosomes. Dephosphorylation of Ser-296 which triggers localization to lysosomes, accumulation of zinc into lysosomes and lysosomal-mediated cell death is induced by TNF-alpha.

The protein resides in the cytoplasmic vesicle. The protein localises to the secretory vesicle membrane. Its subcellular location is the zymogen granule membrane. It localises to the endosome membrane. It is found in the lysosome membrane. The protein resides in the mitochondrion inner membrane. The protein localises to the cell membrane. It catalyses the reaction Zn(2+)(in) + 2 H(+)(out) = Zn(2+)(out) + 2 H(+)(in). Functionally, electroneutral proton-coupled antiporter concentrating zinc ions into a variety of intracellular organelles including endosomes, zymogen granules and mitochondria. Thereby, plays a crucial role in cellular zinc homeostasis to confer upon cells protection against its potential cytotoxicity. Regulates the zinc concentration of milk, through the transport of zinc ions into secretory vesicles of mammary cells. By concentrating zinc ions into lysosomes participates to lysosomal-mediated cell death during early mammary gland involution. Its function is as follows. Electroneutral proton-coupled antiporter mediating the efflux of zinc ions through the plasma membrane. The sequence is that of Proton-coupled zinc antiporter SLC30A2 from Homo sapiens (Human).